A 449-amino-acid polypeptide reads, in one-letter code: MTNEYWQGVDQIKYIGHQDKKSGLGFQYYNPDEVIGGKKMRDWLRFSVAYWHTFDQRLVDPFGDGTAQRPYDHITDPMDLALAKVDAAFEFYHKLGVDYLCFHDRDLAPEGDTLRETNRNLDKVIDKIVDYQKQTGMKVLWNTSNMFTNPRFVAGAATSPDADVFAYAAAQLKHSLEIGKRVGAENYVFWGGREGYESLWNTNMKLEQEHAAKFFHMAKDYANEIGFDAQMLLEPKPKEPSTHQYDFDAATTIAFMKEYDLDKDFKLNLEGNHANLAGHTYQHEIRVAREANLLGSLDANQGDKLIGWDIDEFPSDLYEATAAMYEVVENGSIGPRGGLNFDAKPRRSSFAANDLFYGHIVGIDTFAAGLRVALKMKQDGFLEKLVADRYSSYQSGVGAEIEAGTADFKSLESYAIDKPQSELIAATSSDPLEEVKDTINHYIIETLSK.

Catalysis depends on residues His-103 and Asp-106. Mg(2+) contacts are provided by Glu-234, Glu-270, His-273, Asp-298, Asp-309, Asp-311, and Asp-342.

It belongs to the xylose isomerase family. As to quaternary structure, homotetramer. Mg(2+) is required as a cofactor.

The protein resides in the cytoplasm. It carries out the reaction alpha-D-xylose = alpha-D-xylulofuranose. Involved in D-xylose catabolism. This is Xylose isomerase (xylA) from Lactiplantibacillus pentosus (Lactobacillus pentosus).